A 271-amino-acid chain; its full sequence is NH(3)-dependent NAD(+) synthetase (271 aa).

ATP is bound at residue 43-50 (GISGGQDS). A Mg(2+)-binding site is contributed by Asp-49. Arg-137 lines the deamido-NAD(+) pocket. Residue Thr-157 coordinates ATP. Mg(2+) is bound at residue Glu-162. 2 residues coordinate deamido-NAD(+): Lys-170 and Asp-177. ATP contacts are provided by Lys-186 and Thr-208. 257–258 (HK) lines the deamido-NAD(+) pocket.

Belongs to the NAD synthetase family. As to quaternary structure, homodimer.

It carries out the reaction deamido-NAD(+) + NH4(+) + ATP = AMP + diphosphate + NAD(+) + H(+). It participates in cofactor biosynthesis; NAD(+) biosynthesis; NAD(+) from deamido-NAD(+) (ammonia route): step 1/1. Functionally, catalyzes the ATP-dependent amidation of deamido-NAD to form NAD. Uses ammonia as a nitrogen source. The chain is NH(3)-dependent NAD(+) synthetase from Exiguobacterium sp. (strain ATCC BAA-1283 / AT1b).